The chain runs to 205 residues: Dihydrofolate reductase (205 aa).

The 201-residue stretch at 1–201 folds into the DHFR domain; the sequence is MLALVVALAS…TSFKMFLYTK (201 aa). NADP(+) contacts are provided by residues alanine 7 and 13 to 19; that span reads GIGNANA. A substrate-binding site is contributed by 29–34; sequence DMAWFR. 62–64 is a binding site for NADP(+); the sequence is RRT. Arginine 78 contacts substrate. NADP(+)-binding positions include 84–86 and 118–125; these read SRG and GGRDVYSL.

It belongs to the dihydrofolate reductase family.

It carries out the reaction (6S)-5,6,7,8-tetrahydrofolate + NADP(+) = 7,8-dihydrofolate + NADPH + H(+). It participates in cofactor biosynthesis; tetrahydrofolate biosynthesis; 5,6,7,8-tetrahydrofolate from 7,8-dihydrofolate: step 1/1. Its function is as follows. Key enzyme in folate metabolism. Catalyzes an essential reaction for de novo glycine and purine synthesis, and for DNA precursor synthesis. The protein is Dihydrofolate reductase (DHFR-1) of Encephalitozoon cuniculi (strain GB-M1) (Microsporidian parasite).